Reading from the N-terminus, the 367-residue chain is DNA replication and repair protein RecF (367 aa).

30–37 (GSNGSGKT) is an ATP binding site.

It belongs to the RecF family.

The protein resides in the cytoplasm. Functionally, the RecF protein is involved in DNA metabolism; it is required for DNA replication and normal SOS inducibility. RecF binds preferentially to single-stranded, linear DNA. It also seems to bind ATP. The chain is DNA replication and repair protein RecF from Pseudomonas putida (strain ATCC 700007 / DSM 6899 / JCM 31910 / BCRC 17059 / LMG 24140 / F1).